The following is a 127-amino-acid chain: Glycine cleavage system H protein (127 aa).

The Lipoyl-binding domain maps to 22–104 (EVVIGITHFA…YEGAWMVKVE (83 aa)). Lys-63 carries the N6-lipoyllysine modification.

The protein belongs to the GcvH family. In terms of assembly, the glycine cleavage system is composed of four proteins: P, T, L and H. (R)-lipoate serves as cofactor.

Functionally, the glycine cleavage system catalyzes the degradation of glycine. The H protein shuttles the methylamine group of glycine from the P protein to the T protein. Its function is as follows. Is also involved in protein lipoylation via its role as an octanoyl/lipoyl carrier protein intermediate. In Bacillus cereus (strain ZK / E33L), this protein is Glycine cleavage system H protein.